The sequence spans 335 residues: Methionine import ATP-binding protein MetN 1 (335 aa).

The ABC transporter domain maps to 2 to 242 (IEFQNVHKTY…PKHPTTKRFV (241 aa)). An ATP-binding site is contributed by 38-45 (GHSGAGKS).

This sequence belongs to the ABC transporter superfamily. Methionine importer (TC 3.A.1.24) family. In terms of assembly, the complex is composed of two ATP-binding proteins (MetN), two transmembrane proteins (MetI) and a solute-binding protein (MetQ).

The protein localises to the cell inner membrane. It catalyses the reaction L-methionine(out) + ATP + H2O = L-methionine(in) + ADP + phosphate + H(+). It carries out the reaction D-methionine(out) + ATP + H2O = D-methionine(in) + ADP + phosphate + H(+). In terms of biological role, part of the ABC transporter complex MetNIQ involved in methionine import. Responsible for energy coupling to the transport system. The sequence is that of Methionine import ATP-binding protein MetN 1 from Pseudomonas fluorescens (strain Pf0-1).